The following is a 188-amino-acid chain: Elongation factor P (188 aa).

It belongs to the elongation factor P family.

The protein localises to the cytoplasm. It functions in the pathway protein biosynthesis; polypeptide chain elongation. Involved in peptide bond synthesis. Stimulates efficient translation and peptide-bond synthesis on native or reconstituted 70S ribosomes in vitro. Probably functions indirectly by altering the affinity of the ribosome for aminoacyl-tRNA, thus increasing their reactivity as acceptors for peptidyl transferase. The chain is Elongation factor P from Exiguobacterium sp. (strain ATCC BAA-1283 / AT1b).